We begin with the raw amino-acid sequence, 223 residues long: Endonuclease NucS (223 aa).

Belongs to the NucS endonuclease family.

The protein resides in the cytoplasm. In terms of biological role, cleaves both 3' and 5' ssDNA extremities of branched DNA structures. The chain is Endonuclease NucS from Streptomyces coelicolor (strain ATCC BAA-471 / A3(2) / M145).